A 201-amino-acid chain; its full sequence is MNVPAPLPPCSILLLAGGRGQRMGGRDKGLIEWQGAALIEHLHRLTRPLTDDLIISCNRNIDRYARYADRLVQDDDTDFNGPLAGIRAALPLARHRWLLILPCDVPLVDAALLRALREKASEYPERPIMVREGQHWQPLLGMIPVAHAATLEAAWQAGERSPRRALEPLQPVALQLEAGDPRLANLNTPCLLTGISENRNK.

GTP is bound by residues 15–17 (LAG), Lys-28, Asp-74, and Asp-104. Residue Asp-104 participates in Mg(2+) binding.

It belongs to the MobA family. As to quaternary structure, monomer. The cofactor is Mg(2+).

It localises to the cytoplasm. The catalysed reaction is Mo-molybdopterin + GTP + H(+) = Mo-molybdopterin guanine dinucleotide + diphosphate. In terms of biological role, transfers a GMP moiety from GTP to Mo-molybdopterin (Mo-MPT) cofactor (Moco or molybdenum cofactor) to form Mo-molybdopterin guanine dinucleotide (Mo-MGD) cofactor. This chain is Molybdenum cofactor guanylyltransferase, found in Pseudomonas syringae pv. syringae (strain B728a).